The primary structure comprises 122 residues: Large ribosomal subunit protein uL14 (122 aa).

This sequence belongs to the universal ribosomal protein uL14 family. In terms of assembly, part of the 50S ribosomal subunit. Forms a cluster with proteins L3 and L19. In the 70S ribosome, L14 and L19 interact and together make contacts with the 16S rRNA in bridges B5 and B8.

Functionally, binds to 23S rRNA. Forms part of two intersubunit bridges in the 70S ribosome. The protein is Large ribosomal subunit protein uL14 of Francisella philomiragia subsp. philomiragia (strain ATCC 25017 / CCUG 19701 / FSC 153 / O#319-036).